The chain runs to 101 residues: MGEIAVGLNKGHQVTKKAGTPRPSRRKGFLSQRVKKVRAVVREVAGWAPYERRVMELLKVGKDKRALKMCKRKLGTHMRGKKKREEMAGVLRKMQAASKGE.

Disordered regions lie at residues 1–31 (MGEI…GFLS) and 75–101 (GTHM…SKGE).

The protein belongs to the eukaryotic ribosomal protein eL36 family.

This Ulva compressa (Green alga) protein is Large ribosomal subunit protein eL36 (RL36).